The primary structure comprises 499 residues: Salviol synthase (499 aa).

The chain crosses the membrane as a helical span at residues 4 to 24 (HIPSLVLCISFFIFFKIVSKL). Cysteine 436 provides a ligand contact to heme.

The protein belongs to the cytochrome P450 family. Heme is required as a cofactor. In terms of tissue distribution, expressed in leaf glandular trichomes.

The protein localises to the membrane. The catalysed reaction is ferruginol + reduced [NADPH--hemoprotein reductase] + O2 = salviol + oxidized [NADPH--hemoprotein reductase] + H2O + H(+). It participates in secondary metabolite biosynthesis; terpenoid biosynthesis. Its function is as follows. Monooxygenase involved in the biosynthesis of labdane-related diterpenes natural products. Catalyzes the oxidation of ferruginol to produce salviol. Salviol is an intermediate in the biosynthesis of carnosate, a potent antioxidant. The protein is Salviol synthase of Salvia pomifera (Apple sage).